The sequence spans 2512 residues: RNA replication protein (2512 aa).

The Alphavirus-like MT domain occupies 156–367 (RLTFSKNVAH…RLDVYLDKFL (212 aa)). Positions 683–803 (LTVIQVPGDG…HSHYSLLVPC (121 aa)) constitute an OTU domain. One can recognise a (+)RNA virus helicase ATP-binding domain in the interval 1520–1696 (AIYTSLVAHN…DFVNTEARPL (177 aa)). The (+)RNA virus helicase C-terminal domain occupies 1697–1874 (ARTFRSPPDV…HLSLSGGGTT (178 aa)). Residues 2265 to 2378 (FDSLEIDIKK…VGEKRDLQCD (114 aa)) form the RdRp catalytic domain.

The enzyme catalyses ATP + H2O = ADP + phosphate + H(+). It carries out the reaction RNA(n) + a ribonucleoside 5'-triphosphate = RNA(n+1) + diphosphate. Functionally, RNA replication. The central part of this protein possibly functions as an ATP-binding helicase (Potential). The polypeptide is RNA replication protein (Citrus leprosis virus C (isolate Citrus sinesis/Brazil/Cordeiropolis/2003) (CiLV-C)).